A 225-amino-acid polypeptide reads, in one-letter code: Glucose-induced degradation protein 8 homolog (225 aa).

The 33-residue stretch at 22–54 (QRAEMNRLIMDYLVTEGYKEAAEKFRIESGTQP) folds into the LisH domain. A CTLH domain is found at 60–117 (SLDDRIKIREAVQKGDLEQAVSMTNKLNPDILDSNQQLYFHLQQQRLIELIREKDIEA).

This sequence belongs to the GID8 family.

The protein resides in the cytoplasm. It is found in the nucleus. In terms of biological role, core component of the CTLH E3 ubiquitin-protein ligase complex that mediates ubiquitination and subsequent proteasomal degradation of target proteins. Acts as a positive regulator of Wnt signaling pathway by promoting beta-catenin (CTNNB1) nuclear accumulation. This Nematostella vectensis (Starlet sea anemone) protein is Glucose-induced degradation protein 8 homolog.